Consider the following 254-residue polypeptide: Ribose-5-phosphate isomerase A (254 aa).

Substrate contacts are provided by residues 45–48, 105–108, and 118–121; these read TGST, DGAD, and KGGG. Catalysis depends on Glu-127, which acts as the Proton acceptor. Lys-145 lines the substrate pocket.

The protein belongs to the ribose 5-phosphate isomerase family. As to quaternary structure, homodimer.

It carries out the reaction aldehydo-D-ribose 5-phosphate = D-ribulose 5-phosphate. The protein operates within carbohydrate degradation; pentose phosphate pathway; D-ribose 5-phosphate from D-ribulose 5-phosphate (non-oxidative stage): step 1/1. Catalyzes the reversible conversion of ribose-5-phosphate to ribulose 5-phosphate. This chain is Ribose-5-phosphate isomerase A, found in Treponema pallidum subsp. pallidum (strain SS14).